Consider the following 389-residue polypeptide: Dihydroorotase (389 aa).

Residues histidine 51 and histidine 53 each coordinate Zn(2+). Substrate contacts are provided by residues 53–55 and asparagine 85; that span reads HVR. Residues lysine 133, histidine 158, histidine 193, and aspartate 256 each coordinate Zn(2+). Lysine 133 bears the N6-carboxylysine mark. Aspartate 256 is a catalytic residue. Substrate-binding positions include histidine 260 and 274 to 275; that span reads PG.

This sequence belongs to the metallo-dependent hydrolases superfamily. DHOase family. Class I DHOase subfamily. The cofactor is Zn(2+).

The catalysed reaction is (S)-dihydroorotate + H2O = N-carbamoyl-L-aspartate + H(+). It functions in the pathway pyrimidine metabolism; UMP biosynthesis via de novo pathway; (S)-dihydroorotate from bicarbonate: step 3/3. Functionally, catalyzes the reversible cyclization of carbamoyl aspartate to dihydroorotate. The chain is Dihydroorotase from Sulfolobus acidocaldarius (strain ATCC 33909 / DSM 639 / JCM 8929 / NBRC 15157 / NCIMB 11770).